We begin with the raw amino-acid sequence, 298 residues long: NAD-dependent L-serine dehydrogenase (298 aa).

NAD(+)-binding positions include 2-31 (KQIAFIGLGHMGAPMATNLLKAGYLLNVFD), 65-66 (LP), Pro66, and Thr96. Lys171 is a catalytic residue. Lys246 serves as a coordination point for NAD(+).

It belongs to the HIBADH-related family. Homotetramer, dimer of dimers.

The enzyme catalyses L-serine + NAD(+) = aminoacetaldehyde + CO2 + NADH. It participates in amino-acid degradation. NAD-dependent L-serine dehydrogenase that catalyzes the oxidation of L-serine and methyl-L-serine and is possibly involved in serine catabolism. Has low activity toward beta-hydroxyisobutyrate. The polypeptide is NAD-dependent L-serine dehydrogenase (Pseudomonas aeruginosa (strain ATCC 15692 / DSM 22644 / CIP 104116 / JCM 14847 / LMG 12228 / 1C / PRS 101 / PAO1)).